The chain runs to 394 residues: Nuclear pore glycoprotein p62 (394 aa).

Tandem repeats lie at residues 22–23 (FG), 50–51 (FG), 75–76 (FG), 77–78 (FG), and 116–117 (FG). A 5 X 2 AA repeats of F-G region spans residues 22 to 117 (FGLSTGTPAA…GTSAAPPAFG (96 aa)). Positions 45–57 (KTTFSFGTPAPTA) are enriched in low complexity. The disordered stretch occupies residues 45-73 (KTTFSFGTPAPTAGIGGGDADNSKAQAPP). Positions 211-341 (SYHQLEEHIN…DNLNEANKGQ (131 aa)) form a coiled coil.

It belongs to the nucleoporin NSP1/NUP62 family. Expressed in adult male accessory glands (at protein level).

The protein localises to the nucleus. It is found in the chromosome. It localises to the nucleus envelope. Its subcellular location is the nuclear pore complex. The protein resides in the cytoplasm. The protein localises to the cytoskeleton. It is found in the spindle pole. It localises to the microtubule organizing center. Its subcellular location is the centrosome. In terms of biological role, essential component of the nuclear pore complex. The N-terminal is probably involved in nucleocytoplasmic transport. The C-terminal is involved in protein-protein interaction probably via coiled-coil formation, promotes its association with centrosomes and may function in anchorage of Nup62 to the pore complex. Binds to transcriptionally active genes. Negatively regulates chromatin attachment to the nuclear envelope, probably by preventing chromatin tethering by Nup154. The polypeptide is Nuclear pore glycoprotein p62 (Drosophila melanogaster (Fruit fly)).